Reading from the N-terminus, the 453-residue chain is tRNA modification GTPase MnmE (453 aa).

3 residues coordinate (6S)-5-formyl-5,6,7,8-tetrahydrofolate: R22, E79, and K119. The TrmE-type G domain occupies 215 to 376 (GMKVVIAGRP…LKLHLKSLMG (162 aa)). A K(+)-binding site is contributed by N225. GTP-binding positions include 225 to 230 (NAGKSS), 244 to 250 (TEIAGTT), 269 to 272 (DTAG), and 334 to 337 (NKAD). S229 is a Mg(2+) binding site. K(+) is bound by residues T244, I246, and T249. T250 contacts Mg(2+). Residue K453 coordinates (6S)-5-formyl-5,6,7,8-tetrahydrofolate.

Belongs to the TRAFAC class TrmE-Era-EngA-EngB-Septin-like GTPase superfamily. TrmE GTPase family. As to quaternary structure, homodimer. Heterotetramer of two MnmE and two MnmG subunits. K(+) is required as a cofactor.

Its subcellular location is the cytoplasm. Its function is as follows. Exhibits a very high intrinsic GTPase hydrolysis rate. Involved in the addition of a carboxymethylaminomethyl (cmnm) group at the wobble position (U34) of certain tRNAs, forming tRNA-cmnm(5)s(2)U34. The polypeptide is tRNA modification GTPase MnmE (Shewanella putrefaciens (strain CN-32 / ATCC BAA-453)).